The chain runs to 139 residues: Putative nickel-responsive regulator (139 aa).

Ni(2+)-binding residues include H79, H90, H92, and C98.

It belongs to the transcriptional regulatory CopG/NikR family. The cofactor is Ni(2+).

In terms of biological role, transcriptional regulator. The polypeptide is Putative nickel-responsive regulator (Nitratidesulfovibrio vulgaris (strain ATCC 29579 / DSM 644 / CCUG 34227 / NCIMB 8303 / VKM B-1760 / Hildenborough) (Desulfovibrio vulgaris)).